We begin with the raw amino-acid sequence, 111 residues long: uncharacterized protein (111 aa).

Its subcellular location is the cytoplasm. It is found in the nucleus. This is an uncharacterized protein from Saccharomyces cerevisiae (strain ATCC 204508 / S288c) (Baker's yeast).